A 305-amino-acid chain; its full sequence is Glycine--tRNA ligase alpha subunit (305 aa).

Belongs to the class-II aminoacyl-tRNA synthetase family. As to quaternary structure, tetramer of two alpha and two beta subunits.

Its subcellular location is the cytoplasm. It carries out the reaction tRNA(Gly) + glycine + ATP = glycyl-tRNA(Gly) + AMP + diphosphate. The protein is Glycine--tRNA ligase alpha subunit of Vibrio vulnificus (strain CMCP6).